Consider the following 234-residue polypeptide: Large ribosomal subunit protein uL1 (234 aa).

This sequence belongs to the universal ribosomal protein uL1 family. As to quaternary structure, part of the 50S ribosomal subunit.

In terms of biological role, binds directly to 23S rRNA. The L1 stalk is quite mobile in the ribosome, and is involved in E site tRNA release. Its function is as follows. Protein L1 is also a translational repressor protein, it controls the translation of the L11 operon by binding to its mRNA. In Desulfosudis oleivorans (strain DSM 6200 / JCM 39069 / Hxd3) (Desulfococcus oleovorans), this protein is Large ribosomal subunit protein uL1.